Here is a 345-residue protein sequence, read N- to C-terminus: Anthranilate phosphoribosyltransferase (345 aa).

5-phospho-alpha-D-ribose 1-diphosphate contacts are provided by residues Gly84, 87-88, Thr92, 94-97, 112-120, and Ser124; these read GD, NIST, and KHGNRSVSS. Gly84 contacts anthranilate. Position 96 (Ser96) interacts with Mg(2+). Anthranilate is bound at residue Asn115. Arg170 contacts anthranilate. Residues Asp229 and Glu230 each coordinate Mg(2+).

Belongs to the anthranilate phosphoribosyltransferase family. As to quaternary structure, homodimer. Mg(2+) is required as a cofactor.

The catalysed reaction is N-(5-phospho-beta-D-ribosyl)anthranilate + diphosphate = 5-phospho-alpha-D-ribose 1-diphosphate + anthranilate. It functions in the pathway amino-acid biosynthesis; L-tryptophan biosynthesis; L-tryptophan from chorismate: step 2/5. Functionally, catalyzes the transfer of the phosphoribosyl group of 5-phosphorylribose-1-pyrophosphate (PRPP) to anthranilate to yield N-(5'-phosphoribosyl)-anthranilate (PRA). The chain is Anthranilate phosphoribosyltransferase from Xanthomonas campestris pv. campestris (strain B100).